The chain runs to 573 residues: Urease subunit alpha (573 aa).

Residues 136–573 (GAIDCHVHLI…LPMAQRYFLF (438 aa)) enclose the Urease domain. Ni(2+) is bound by residues His-141, His-143, and Lys-224. Lys-224 carries the post-translational modification N6-carboxylysine. His-226 is a substrate binding site. Residues His-253 and His-279 each coordinate Ni(2+). The Proton donor role is filled by His-327. Position 367 (Asp-367) interacts with Ni(2+).

This sequence belongs to the metallo-dependent hydrolases superfamily. Urease alpha subunit family. As to quaternary structure, heterotrimer of UreA (gamma), UreB (beta) and UreC (alpha) subunits. Three heterotrimers associate to form the active enzyme. The cofactor is Ni cation. Post-translationally, carboxylation allows a single lysine to coordinate two nickel ions.

It localises to the cytoplasm. The catalysed reaction is urea + 2 H2O + H(+) = hydrogencarbonate + 2 NH4(+). It functions in the pathway nitrogen metabolism; urea degradation; CO(2) and NH(3) from urea (urease route): step 1/1. The protein is Urease subunit alpha of Mycobacterium sp. (strain JLS).